We begin with the raw amino-acid sequence, 159 residues long: Aphid transmission protein (159 aa).

Belongs to the caulimoviridae ORF II family.

This protein is involved in virus transmission. The chain is Aphid transmission protein from Cauliflower mosaic virus (strain NY8153) (CaMV).